Here is a 312-residue protein sequence, read N- to C-terminus: Polyhedral envelope protein (312 aa).

Belongs to the baculoviridae PE family.

The protein resides in the virion membrane. In terms of biological role, major component of the polyhedra envelope. In Lymantria dispar multicapsid nuclear polyhedrosis virus (LdMNPV), this protein is Polyhedral envelope protein.